Here is a 113-residue protein sequence, read N- to C-terminus: Protein CTLA-2-beta (113 aa).

2 tandem repeats follow at residues 15-17 (EWK) and 18-20 (EWK). Positions 15 to 20 (EWKEWK) are 2 X 3 AA tandem repeats of E-W-K.

The protein to the propeptide regions of cysteine proteases.

Functionally, not known, expressed in activated T-cell. The chain is Protein CTLA-2-beta (Ctla2b) from Mus musculus (Mouse).